The following is a 66-amino-acid chain: MRLAYLLLLLVAVLFQAGGGSAKPIMFFEMQACWSHSGVCRDKSERNCKPMAWTYCENRNQKCCEY.

Positions 1–22 are cleaved as a signal peptide; sequence MRLAYLLLLLVAVLFQAGGGSA. Positions 23–24 are excised as a propeptide; sequence KP. Met-26 carries the D-methionine; in form DLP-2 modification. 3 disulfide bridges follow: Cys-33–Cys-63, Cys-40–Cys-56, and Cys-48–Cys-64.

Post-translationally, stereoinversion of L-Met-26 (in DLP-4) to D-Met-26 (in DLP-2). In terms of tissue distribution, produced by the crural gland and detected in venom from the spur located on each male hind leg. Is also widely expressed in both male and female tissues, including brain, intestine, kidney, lung, spleen and testis.

The protein localises to the secreted. Does not show antimicrobial, myotoxic, hemolytic and cell-promoting activities. This chain is Defensin-like peptide 2/4, found in Ornithorhynchus anatinus (Duckbill platypus).